A 222-amino-acid chain; its full sequence is Adenylate kinase (222 aa).

10–15 (GAGKGT) provides a ligand contact to ATP. The segment at 30 to 59 (STGDMLRAAVKAGTPLGIEAKKVMDAGGLV) is NMP. AMP is bound by residues Thr31, Arg36, 57 to 59 (GLV), 85 to 88 (GFPR), and Gln92. The interval 122–159 (GRRVHVASGRTYHVKYNPPKTEGVDDESGEPLIQRDDD) is LID. ATP contacts are provided by residues Arg123 and 132–133 (TY). Residues 138–160 (NPPKTEGVDDESGEPLIQRDDDK) are disordered. 2 residues coordinate AMP: Arg156 and Arg167. Gly207 is a binding site for ATP.

Belongs to the adenylate kinase family. In terms of assembly, monomer.

Its subcellular location is the cytoplasm. The enzyme catalyses AMP + ATP = 2 ADP. It participates in purine metabolism; AMP biosynthesis via salvage pathway; AMP from ADP: step 1/1. Functionally, catalyzes the reversible transfer of the terminal phosphate group between ATP and AMP. Plays an important role in cellular energy homeostasis and in adenine nucleotide metabolism. This chain is Adenylate kinase, found in Ralstonia pickettii (strain 12J).